Here is a 450-residue protein sequence, read N- to C-terminus: NADP-specific glutamate dehydrogenase (450 aa).

Lys111 is a catalytic residue.

This sequence belongs to the Glu/Leu/Phe/Val dehydrogenases family. As to quaternary structure, homohexamer.

The enzyme catalyses L-glutamate + NADP(+) + H2O = 2-oxoglutarate + NH4(+) + NADPH + H(+). This is NADP-specific glutamate dehydrogenase (GDHA) from Laccaria bicolor (strain S238N-H82 / ATCC MYA-4686) (Bicoloured deceiver).